Consider the following 475-residue polypeptide: Flavin-dependent monooxygenase (475 aa).

This sequence belongs to the aromatic-ring hydroxylase family. The cofactor is FAD.

The protein resides in the cytoplasm. It catalyses the reaction a tetracycline + NADPH + O2 + H(+) = an 11a-hydroxytetracycline + NADP(+) + H2O. The enzyme catalyses tetracycline + NADPH + O2 + H(+) = 11a-hydroxytetracycline + NADP(+) + H2O. Its activity is regulated as follows. Inhibited by anhydrotetracycline. In terms of biological role, an FAD-requiring monooxygenase active on some tetracycline antibiotic derivatives, which leads to their inactivation. Hydroxylates carbon 11a of tetracycline and some analogs. Confers resistance to tetracycline and doxycycline via an oxidoreductase activity; probably monooxygenates the antibiotics. Does not act on tigecycline. This is Flavin-dependent monooxygenase from Mycobacteroides abscessus (strain ATCC 19977 / DSM 44196 / CCUG 20993 / CIP 104536 / JCM 13569 / NCTC 13031 / TMC 1543 / L948) (Mycobacterium abscessus).